Here is a 363-residue protein sequence, read N- to C-terminus: UDP-N-acetylenolpyruvoylglucosamine reductase (363 aa).

The FAD-binding PCMH-type domain occupies leucine 27–serine 197. The active site involves arginine 175. The active-site Proton donor is serine 252. Residue glutamate 355 is part of the active site.

The protein belongs to the MurB family. FAD serves as cofactor.

Its subcellular location is the cytoplasm. It carries out the reaction UDP-N-acetyl-alpha-D-muramate + NADP(+) = UDP-N-acetyl-3-O-(1-carboxyvinyl)-alpha-D-glucosamine + NADPH + H(+). It participates in cell wall biogenesis; peptidoglycan biosynthesis. Its function is as follows. Cell wall formation. This Salinispora arenicola (strain CNS-205) protein is UDP-N-acetylenolpyruvoylglucosamine reductase.